Reading from the N-terminus, the 326-residue chain is Pyruvate dehydrogenase E1 component subunit alpha (326 aa).

Heterodimer of an alpha and a beta chain. The cofactor is thiamine diphosphate.

It carries out the reaction N(6)-[(R)-lipoyl]-L-lysyl-[protein] + pyruvate + H(+) = N(6)-[(R)-S(8)-acetyldihydrolipoyl]-L-lysyl-[protein] + CO2. Its function is as follows. The pyruvate dehydrogenase complex catalyzes the overall conversion of pyruvate to acetyl-CoA and CO(2). It contains multiple copies of three enzymatic components: pyruvate dehydrogenase (E1), dihydrolipoamide acetyltransferase (E2) and lipoamide dehydrogenase (E3). This is Pyruvate dehydrogenase E1 component subunit alpha (pdhA) from Rickettsia conorii (strain ATCC VR-613 / Malish 7).